We begin with the raw amino-acid sequence, 228 residues long: LHFPL tetraspan subfamily member 2 protein (228 aa).

The next 4 helical transmembrane spans lie at 11-31 (MLWT…FMSA), 102-122 (IFLA…VFTM), 132-152 (IFNV…LGLI), and 181-201 (LGWA…CAVF).

It belongs to the LHFP family. As to expression, expressed in all tissues and cell lines examined except brain and peripheral blood leukocytes.

Its subcellular location is the membrane. Plays a role in female and male fertility. Involved in distal reproductive tract development. The chain is LHFPL tetraspan subfamily member 2 protein from Homo sapiens (Human).